A 429-amino-acid chain; its full sequence is Probable electron transfer flavoprotein-quinone oxidoreductase YdiS (429 aa).

8 to 22 (AIVVGAGVAGSVAAL) provides a ligand contact to FAD.

This sequence belongs to the ETF-QO/FixC family. FAD is required as a cofactor.

Functionally, probably accepts electrons from YdiQ/YdiR and reduces a quinone. In Escherichia coli (strain K12), this protein is Probable electron transfer flavoprotein-quinone oxidoreductase YdiS (ydiS).